The following is a 137-amino-acid chain: SPbeta prophage-derived disulfide bond formation protein A (137 aa).

The N-terminal stretch at 1-25 (MKKWIVLFLVLIAAAISIFVYVSTG) is a signal peptide. One can recognise a Thioredoxin domain in the interval 26-136 (SEKPFYNDIN…IEKFFDKNGD (111 aa)). Cysteine 58 and cysteine 61 are disulfide-bonded.

Belongs to the thioredoxin family.

The protein resides in the secreted. Its function is as follows. Unknown; dispensable for production of the lantibiotic sublancin 168 and for competence for DNA uptake. The sequence is that of SPbeta prophage-derived disulfide bond formation protein A (bdbA) from Bacillus subtilis (strain 168).